Consider the following 272-residue polypeptide: Ribonuclease HII (272 aa).

Residues 30 to 221 enclose the RNase H type-2 domain; that stretch reads GPVAGVDEVG…VRRAAEATGV (192 aa). Asp-36, Glu-37, and Asp-130 together coordinate a divalent metal cation.

It belongs to the RNase HII family. Mn(2+) is required as a cofactor. Mg(2+) serves as cofactor.

The protein resides in the cytoplasm. The enzyme catalyses Endonucleolytic cleavage to 5'-phosphomonoester.. Endonuclease that specifically degrades the RNA of RNA-DNA hybrids. The polypeptide is Ribonuclease HII (Mycolicibacterium smegmatis (strain ATCC 700084 / mc(2)155) (Mycobacterium smegmatis)).